The following is a 1316-amino-acid chain: DNA-directed RNA polymerase subunit beta' (1316 aa).

Zn(2+) contacts are provided by Cys60, Cys62, Cys75, and Cys78. Positions 535, 537, and 539 each coordinate Mg(2+). Positions 891, 968, 975, and 978 each coordinate Zn(2+).

It belongs to the RNA polymerase beta' chain family. The RNAP catalytic core consists of 2 alpha, 1 beta, 1 beta' and 1 omega subunit. When a sigma factor is associated with the core the holoenzyme is formed, which can initiate transcription. The cofactor is Mg(2+). It depends on Zn(2+) as a cofactor.

The enzyme catalyses RNA(n) + a ribonucleoside 5'-triphosphate = RNA(n+1) + diphosphate. In terms of biological role, DNA-dependent RNA polymerase catalyzes the transcription of DNA into RNA using the four ribonucleoside triphosphates as substrates. The sequence is that of DNA-directed RNA polymerase subunit beta' from Mycobacterium tuberculosis (strain CDC 1551 / Oshkosh).